Consider the following 325-residue polypeptide: Phosphate acyltransferase (325 aa).

It belongs to the PlsX family. As to quaternary structure, homodimer. Probably interacts with PlsY.

It is found in the cytoplasm. It carries out the reaction a fatty acyl-[ACP] + phosphate = an acyl phosphate + holo-[ACP]. The protein operates within lipid metabolism; phospholipid metabolism. Functionally, catalyzes the reversible formation of acyl-phosphate (acyl-PO(4)) from acyl-[acyl-carrier-protein] (acyl-ACP). This enzyme utilizes acyl-ACP as fatty acyl donor, but not acyl-CoA. The polypeptide is Phosphate acyltransferase (Mycoplasmopsis pulmonis (strain UAB CTIP) (Mycoplasma pulmonis)).